A 610-amino-acid chain; its full sequence is Zinc metalloproteinase-disintegrin-like acurhagin (610 aa).

Residues 1–20 (MIQVLLVTICLAAFPYQGSS) form the signal peptide. Positions 21 to 191 (IILESGDVND…ISQLNLIPEQ (171 aa)) are excised as a propeptide. Gln192 is subject to Pyrrolidone carboxylic acid. One can recognise a Peptidase M12B domain in the interval 198 to 394 (KYVETVVVVD…HNPECIDNEP (197 aa)). Residues Glu201 and Asp285 each coordinate Ca(2+). Disulfide bonds link Cys309–Cys389, Cys349–Cys373, and Cys351–Cys356. Residue His334 coordinates Zn(2+). Glu335 is an active-site residue. Zn(2+) is bound by residues His338 and His344. Asn372 carries an N-linked (GlcNAc...) asparagine glycan. Cys389, Asn392, Asn407, Leu409, Glu411, Glu414, and Asp417 together coordinate Ca(2+). One can recognise a Disintegrin domain in the interval 402–488 (PPLCGNELLE…ECPADVFHKN (87 aa)). 14 cysteine pairs are disulfide-bonded: Cys405/Cys434, Cys416/Cys429, Cys418/Cys424, Cys428/Cys451, Cys442/Cys448, Cys447/Cys473, Cys460/Cys480, Cys467/Cys499, Cys492/Cys504, Cys511/Cys561, Cys526/Cys572, Cys539/Cys549, Cys556/Cys598, and Cys592/Cys603. Positions 466–468 (ECD) match the D/ECD-tripeptide motif. Ca(2+) contacts are provided by Asp468, Pro469, Glu471, Asp483, and Val484.

The protein belongs to the venom metalloproteinase (M12B) family. P-III subfamily. P-IIIa sub-subfamily. As to quaternary structure, monomer. Requires Zn(2+) as cofactor. In terms of processing, N-glycosylated. As to expression, expressed by the venom gland.

It is found in the secreted. The proteinase activity is slightly enhanced by Ca(2+) and Mg(2+), but is completely inhibited by Zn(2+). Is completely inhibited by phenanthroline and EDTA. Not inhibited by PMSF. Snake venom zinc metalloprotease that causes hemorrhage and dose-dependently inhibits platelet aggregation triggered by collagen. This inhibition is due to its binding to glycoprotein VI (GP6) and collagen. The binding to GP6 results in inhibition of the signaling pathway (decrease of tyrosine phosphorylation of signaling proteins such as Syk, LAT, PI3-K and PLCgamma2). Preferentially cleaves alpha chain (FGA) of fibrinogen, followed by beta chain (FGB). Also degrades the extracellular matrix protein fibronectin (FN1), and cleaves collagen and von Willebrand factor (VWF). This Deinagkistrodon acutus (Hundred-pace snake) protein is Zinc metalloproteinase-disintegrin-like acurhagin.